A 370-amino-acid chain; its full sequence is Metallophosphoesterase 1 homolog (370 aa).

A helical transmembrane segment spans residues 7-27; it reads CFVIVLCALIFCEYVADFVVL. The a divalent metal cation site is built by aspartate 52, aspartate 94, asparagine 132, histidine 225, histidine 275, and histidine 277. A helical membrane pass occupies residues 328–348; the sequence is FVFNSYLSAGILCLIVIGFQL.

It belongs to the metallophosphoesterase superfamily. MPPE1 family. Mn(2+) serves as cofactor.

Its subcellular location is the membrane. Functionally, metallophosphoesterase. The polypeptide is Metallophosphoesterase 1 homolog (PGAP5) (Drosophila melanogaster (Fruit fly)).